A 263-amino-acid chain; its full sequence is Endonuclease 8 (263 aa).

The active-site Schiff-base intermediate with DNA is the Pro2. The Proton donor role is filled by Glu3. Residue Lys53 is the Proton donor; for beta-elimination activity of the active site. DNA-binding residues include Gln70, Arg125, and Asn169. An FPG-type zinc finger spans residues 229–263 (KLFHRDGEACERCGGIIEKTTLSSRPFYWCPHCQK). The active-site Proton donor; for delta-elimination activity is Arg253.

This sequence belongs to the FPG family. Requires Zn(2+) as cofactor.

It carries out the reaction 2'-deoxyribonucleotide-(2'-deoxyribose 5'-phosphate)-2'-deoxyribonucleotide-DNA = a 3'-end 2'-deoxyribonucleotide-(2,3-dehydro-2,3-deoxyribose 5'-phosphate)-DNA + a 5'-end 5'-phospho-2'-deoxyribonucleoside-DNA + H(+). In terms of biological role, involved in base excision repair of DNA damaged by oxidation or by mutagenic agents. Acts as a DNA glycosylase that recognizes and removes damaged bases. Has a preference for oxidized pyrimidines, such as thymine glycol, 5,6-dihydrouracil and 5,6-dihydrothymine. Has AP (apurinic/apyrimidinic) lyase activity and introduces nicks in the DNA strand. Cleaves the DNA backbone by beta-delta elimination to generate a single-strand break at the site of the removed base with both 3'- and 5'-phosphates. This is Endonuclease 8 from Salmonella typhimurium (strain SL1344).